A 436-amino-acid chain; its full sequence is GTPase Der (436 aa).

EngA-type G domains follow at residues Pro-4 to Ser-167 and Ile-176 to Lys-351. Residues Gly-10–Ser-17, Asp-57–Ile-61, Asn-119–Asp-122, Gly-182–Ser-189, Asp-229–Met-233, and Asn-294–Asp-297 each bind GTP. The region spanning Lys-352–Asn-436 is the KH-like domain.

This sequence belongs to the TRAFAC class TrmE-Era-EngA-EngB-Septin-like GTPase superfamily. EngA (Der) GTPase family. As to quaternary structure, associates with the 50S ribosomal subunit.

In terms of biological role, GTPase that plays an essential role in the late steps of ribosome biogenesis. In Staphylococcus epidermidis (strain ATCC 35984 / DSM 28319 / BCRC 17069 / CCUG 31568 / BM 3577 / RP62A), this protein is GTPase Der.